Here is a 544-residue protein sequence, read N- to C-terminus: Ell-associated factor Eaf (544 aa).

The tract at residues 147 to 544 (QSVPMNMGHQ…LSSNSSDDDD (398 aa)) is disordered. Residues 193–202 (SSKDKVDFKP) are compositionally biased toward basic and acidic residues. Position 205 is a phosphoserine (S205). Over residues 264–273 (SGSSTGSSSG) the composition is skewed to low complexity. The span at 287–299 (GKQRQAHGKRQQI) shows a compositional bias: basic residues. Low complexity-rich tracts occupy residues 305–319 (PPVQ…QQQP), 333–374 (QPHP…QQRP), and 396–407 (ASQSVAQAAAVL). Residues 425–440 (DSSDSDSGSDSDDSTE) are compositionally biased toward acidic residues. Low complexity-rich tracts occupy residues 450 to 483 (EQQQ…HMNQ), 503 to 513 (QQPQPQPQQQQ), and 526 to 544 (NDLL…DDDD).

This sequence belongs to the EAF family.

The protein resides in the nucleus. In terms of biological role, promotes transcriptional elongation by Su(Tpl)/ELL. Essential for development. The chain is Ell-associated factor Eaf from Drosophila persimilis (Fruit fly).